The chain runs to 283 residues: Tryptophan 2,3-dioxygenase (283 aa).

Residues 52–56 (FIIQH), Y114, and R118 contribute to the substrate site. H241 contributes to the heme binding site. T255 provides a ligand contact to substrate.

It belongs to the tryptophan 2,3-dioxygenase family. Homotetramer. Heme is required as a cofactor.

The enzyme catalyses L-tryptophan + O2 = N-formyl-L-kynurenine. Its pathway is amino-acid degradation; L-tryptophan degradation via kynurenine pathway; L-kynurenine from L-tryptophan: step 1/2. Functionally, heme-dependent dioxygenase that catalyzes the oxidative cleavage of the L-tryptophan (L-Trp) pyrrole ring and converts L-tryptophan to N-formyl-L-kynurenine. Catalyzes the oxidative cleavage of the indole moiety. The polypeptide is Tryptophan 2,3-dioxygenase (Pseudomonas fluorescens (strain ATCC BAA-477 / NRRL B-23932 / Pf-5)).